The following is a 43-amino-acid chain: Protein PsbN (43 aa).

The chain crosses the membrane as a helical span at residues 5 to 27 (TVLSIFISSLLLGITGYSIYTAF).

It belongs to the PsbN family.

Its subcellular location is the plastid. It is found in the chloroplast thylakoid membrane. Its function is as follows. May play a role in photosystem I and II biogenesis. In Porphyra purpurea (Red seaweed), this protein is Protein PsbN.